Consider the following 358-residue polypeptide: Alpha-ketoglutarate-dependent L-arginine hydroxylase (358 aa).

A disordered region spans residues 1 to 21 (MTESPTTHHGAAPPDSVATPV). Residues 117–135 (LSFLLMLYAGLLGDVFGWA) traverse the membrane as a helical segment. L-arginine is bound at residue 156-158 (LVS). The Fe cation site is built by histidine 168 and glutamate 170. Threonine 194 contacts 2-oxoglutarate. 268–270 (DGD) serves as a coordination point for L-arginine. Position 316 (histidine 316) interacts with Fe cation. Positions 330 and 334 each coordinate 2-oxoglutarate. Arginine 334 is an L-arginine binding site.

The protein belongs to the clavaminate synthase family. It depends on Fe cation as a cofactor.

Its subcellular location is the membrane. The enzyme catalyses L-arginine + 2-oxoglutarate + O2 = (2S,3S)-hydroxyarginine + succinate + CO2. It functions in the pathway antibiotic biosynthesis. Functionally, involved in the biosynthesis of capreomycidine, an unusual amino acid used by non-ribosomal peptide synthases (NRPS) to make the tuberactinomycin class of peptide antibiotics such as viomycin and capreomycin. Catalyzes the stereospecific hydroxylation of the C3 of (2S)-arginine to generate (3S)-hydroxy-(2S)-arginine. Usually clavaminic acid synthase-like oxygenases catalyze the formation of threo diastereomers, however VioC produces the erythro diastereomer of beta-carbon-hydroxylated L-arginine. It exerts a broad substrate specificity by accepting the analogs L-homoarginine and L-canavanine for the beta-carbon hydroxylation. The polypeptide is Alpha-ketoglutarate-dependent L-arginine hydroxylase (vioC) (Streptomyces vinaceus).